Consider the following 65-residue polypeptide: Small ribosomal subunit protein bS21 (65 aa).

This sequence belongs to the bacterial ribosomal protein bS21 family.

This is Small ribosomal subunit protein bS21 from Cytophaga hutchinsonii (strain ATCC 33406 / DSM 1761 / CIP 103989 / NBRC 15051 / NCIMB 9469 / D465).